Here is a 354-residue protein sequence, read N- to C-terminus: UPF0283 membrane protein HI_0043 (354 aa).

Transmembrane regions (helical) follow at residues 57 to 77, 87 to 107, and 211 to 231; these read LLKFTALLFGLATVAQSVQWI, IYLAFALVSLIIILLGIKEII, and ESAVIVAISPLAVVDMFFIAW.

The protein belongs to the UPF0283 family.

The protein localises to the cell inner membrane. In Haemophilus influenzae (strain ATCC 51907 / DSM 11121 / KW20 / Rd), this protein is UPF0283 membrane protein HI_0043.